The chain runs to 190 residues: ATP synthase subunit b (190 aa).

The chain crosses the membrane as a helical span at residues 34 to 54 (LDIFETNLINLAILVGILFYF).

It belongs to the ATPase B chain family. In terms of assembly, F-type ATPases have 2 components, F(1) - the catalytic core - and F(0) - the membrane proton channel. F(1) has five subunits: alpha(3), beta(3), gamma(1), delta(1), epsilon(1). F(0) has four main subunits: a(1), b(1), b'(1) and c(10-14). The alpha and beta chains form an alternating ring which encloses part of the gamma chain. F(1) is attached to F(0) by a central stalk formed by the gamma and epsilon chains, while a peripheral stalk is formed by the delta, b and b' chains.

Its subcellular location is the cellular thylakoid membrane. Functionally, f(1)F(0) ATP synthase produces ATP from ADP in the presence of a proton or sodium gradient. F-type ATPases consist of two structural domains, F(1) containing the extramembraneous catalytic core and F(0) containing the membrane proton channel, linked together by a central stalk and a peripheral stalk. During catalysis, ATP synthesis in the catalytic domain of F(1) is coupled via a rotary mechanism of the central stalk subunits to proton translocation. Component of the F(0) channel, it forms part of the peripheral stalk, linking F(1) to F(0). This chain is ATP synthase subunit b, found in Nostoc punctiforme (strain ATCC 29133 / PCC 73102).